The primary structure comprises 387 residues: Methylthioribose-1-phosphate isomerase (387 aa).

The active-site Proton donor is the Asp257.

Belongs to the eIF-2B alpha/beta/delta subunits family. MtnA subfamily.

Its subcellular location is the cytoplasm. The protein localises to the nucleus. The enzyme catalyses 5-(methylsulfanyl)-alpha-D-ribose 1-phosphate = 5-(methylsulfanyl)-D-ribulose 1-phosphate. It functions in the pathway amino-acid biosynthesis; L-methionine biosynthesis via salvage pathway; L-methionine from S-methyl-5-thio-alpha-D-ribose 1-phosphate: step 1/6. Its function is as follows. Catalyzes the interconversion of methylthioribose-1-phosphate (MTR-1-P) into methylthioribulose-1-phosphate (MTRu-1-P). The polypeptide is Methylthioribose-1-phosphate isomerase (mri1) (Neosartorya fischeri (strain ATCC 1020 / DSM 3700 / CBS 544.65 / FGSC A1164 / JCM 1740 / NRRL 181 / WB 181) (Aspergillus fischerianus)).